The sequence spans 937 residues: MKVVSNFIFTILLTLNLSAALEVVTSRIDRGGIQGFHGDVKVHSGATWAILGTTLCSFFGGLEVEKGASLFIKSDNGPVLALNVALSTLVRPVINNGVISLNSKSSTSFSNFDIGGSSFTNNGEIYLDSSGLVKSTAYLYAREWTNNGLIVAYQNQKAAGNIAFGTAYQTITNNGQICLRHQDFVPATKIKGTGCVTADEDTWIKLGNTILSVEPTHNFYLKDSKSSLIVHAVSSNQTFTVHGFGNGNKLGLTLPLTGNRDHFRFEYYPDTGILQLRADALPQYFKIGKGYDSKLFRIVNSRGLKNAVTYDGPVPNNEIPAVCLIPCTNGPSAPESESDLNTPTTSSIETSSYSSAATESSVVSESSSAVDSLTSSSLSSKSESSDVVSSTTNIESSSTAIETTMNSESSTDAGSSSISQSESSSTAITSSSETSSSESMSASSTTASNTSIETDSGIVSQSESSSNALSSTEQSITSSPGQSTIYVNSTVTSTITSCDENKCTEDVVTIFTTVPCSTDCVPTTGDIPMSTSYTQRTVTSTITNCDEVSCSQDVVTYTTNVPHTTVDATTTTTTSTGGDNSTGGNESGSNHGPGNGSTEGSGNGSGAGSNEGSQSGPNNGSGSGSEGGSNNGSGSDSGSNNGSGSGSNNGSGSGSTEGSEGGSGSNEGSQSGSGSQPGPNEGSEGGSGSNEGSNHGSNEGSGSGSGSGSNNGSGSGSQSGSGSGSQSGSESGSNSGSNEGSNPGAGNGSNEGSGQGSGNGSEAGSGQGSGPNNGSGSGHNDGSGSGSNQGSNPGAGSGSGSESGSKAGSHSGSNEGAKTDSIEGFHTESKPGFNTGAHTDATVTGNSVANPVTTSTESDTTISVTVSITSYMTGFDGKPKPFTTVDVIPVPHSMPSNTTDSSSSVPTIDTNENGSSIVTGGKSILFGLIVSMVVLFM.

A signal peptide spans 1–20 (MKVVSNFIFTILLTLNLSAA). N-linked (GlcNAc...) asparagine glycosylation occurs at Asn16. The helical transmembrane segment at 42–62 (VHSGATWAILGTTLCSFFGGL) threads the bilayer. A glycan (N-linked (GlcNAc...) asparagine) is linked at Asn236. A disordered region spans residues 332–483 (SAPESESDLN…QSITSSPGQS (152 aa)). Low complexity predominate over residues 344–392 (TTSSIETSSYSSAATESSVVSESSSAVDSLTSSSLSSKSESSDVVSSTT). Positions 393–414 (NIESSSTAIETTMNSESSTDAG) are enriched in polar residues. A compositionally biased stretch (low complexity) spans 415 to 475 (SSSISQSESS…SNALSSTEQS (61 aa)). N-linked (GlcNAc...) asparagine glycosylation is found at Asn449, Asn488, Asn580, Asn585, Asn595, and Asn603. Residues 567–590 (DATTTTTTSTGGDNSTGGNESGSN) show a composition bias toward low complexity. Residues 567–857 (DATTTTTTST…VANPVTTSTE (291 aa)) form a disordered region. Gly residues predominate over residues 591-609 (HGPGNGSTEGSGNGSGAGS). Repeat 1 spans residues 610–613 (NEGS). Positions 610–753 (NEGSQSGPNN…GAGNGSNEGS (144 aa)) are 7 X 4 AA repeats of N-E-G-S. 4 N-linked (GlcNAc...) asparagine glycosylation sites follow: Asn619, Asn631, Asn641, and Asn649. Gly residues-rich tracts occupy residues 619–631 (NGSG…GSNN) and 641–665 (NGSG…GSGS). 4 consecutive repeat copies span residues 666-669 (NEGS), 680-683 (NEGS), 690-693 (NEGS), and 698-701 (NEGS). Over residues 666–682 (NEGSQSGSGSQPGPNEG) the composition is skewed to low complexity. The segment covering 699 to 725 (EGSGSGSGSGSNNGSGSGSQSGSGSGS) has biased composition (gly residues). Residue Asn711 is glycosylated (N-linked (GlcNAc...) asparagine). Positions 726–742 (QSGSESGSNSGSNEGSN) are enriched in low complexity. Residues 738–741 (NEGS) form repeat 6. A compositionally biased stretch (gly residues) spans 743-801 (PGAGNGSNEGSGQGSGNGSEAGSGQGSGPNNGSGSGHNDGSGSGSNQGSNPGAGSGSGS). N-linked (GlcNAc...) asparagine glycosylation is present at Asn747. Repeat 7 spans residues 750–753 (NEGS). 2 N-linked (GlcNAc...) asparagine glycosylation sites follow: Asn759 and Asn773. The span at 802–814 (ESGSKAGSHSGSN) shows a compositional bias: low complexity. Positions 817–829 (AKTDSIEGFHTES) are enriched in basic and acidic residues. Polar residues predominate over residues 841–851 (ATVTGNSVANP). 2 N-linked (GlcNAc...) asparagine glycosylation sites follow: Asn897 and Asn913. Asn913 is lipidated: GPI-anchor amidated asparagine. The propeptide at 914-937 (GSSIVTGGKSILFGLIVSMVVLFM) is removed in mature form.

It is found in the cell membrane. The protein localises to the secreted. It localises to the cell wall. Functionally, nonessential component of the hyphal cell wall. The chain is Hyphally-regulated protein (HYR1) from Candida albicans (Yeast).